The following is a 291-amino-acid chain: Undecaprenyl-diphosphatase (291 aa).

The next 8 membrane-spanning stretches (helical) occupy residues 1–21 (MLIL…LTEF), 48–68 (SAFT…AWVF), 99–119 (LHII…DDVI), 123–143 (LFSV…MIIA), 159–179 (INYF…WPGF), 200–220 (SDFT…LSLV), 236–256 (LGFL…LYLI), and 269–289 (IVLV…QGIT).

Belongs to the UppP family.

It is found in the cell membrane. The catalysed reaction is di-trans,octa-cis-undecaprenyl diphosphate + H2O = di-trans,octa-cis-undecaprenyl phosphate + phosphate + H(+). Catalyzes the dephosphorylation of undecaprenyl diphosphate (UPP). Confers resistance to bacitracin. The sequence is that of Undecaprenyl-diphosphatase from Staphylococcus saprophyticus subsp. saprophyticus (strain ATCC 15305 / DSM 20229 / NCIMB 8711 / NCTC 7292 / S-41).